A 43-amino-acid polypeptide reads, in one-letter code: Hemolysin H1U (43 aa).

M1 carries the N-formylmethionine modification.

This sequence belongs to the staphylococcal hemolytic protein family.

It is found in the secreted. Virulence factor. Causes hemolysis of erythrocytes. Acts synergistically with beta-hemolysins from S.aureus ATCC 25923. Cytotoxic towards human dermal fibroblasts. The chain is Hemolysin H1U from Staphylococcus ureilyticus (Staphylococcus cohnii subsp. urealyticus).